Consider the following 681-residue polypeptide: PTS system glucose-specific EIICBA component (681 aa).

Residues lysine 3–aspartate 414 enclose the PTS EIIC type-1 domain. 10 helical membrane-spanning segments follow: residues leucine 16–methionine 36, methionine 73–alanine 93, isoleucine 126–alanine 146, phenylalanine 170–tryptophan 190, alanine 199–isoleucine 219, phenylalanine 273–tyrosine 293, valine 303–proline 323, phenylalanine 328–leucine 348, leucine 355–proline 375, and valine 383–valine 403. The PTS EIIB type-1 domain maps to threonine 425–glutamate 506. Cysteine 447 functions as the Phosphocysteine intermediate; for EIIB activity in the catalytic mechanism. Residues aspartate 551–glutamine 655 form the PTS EIIA type-1 domain. Histidine 603 serves as the catalytic Tele-phosphohistidine intermediate; for EIIA activity.

It is found in the cell membrane. The catalysed reaction is N(pros)-phospho-L-histidyl-[protein] + D-glucose(out) = D-glucose 6-phosphate(in) + L-histidyl-[protein]. Functionally, the phosphoenolpyruvate-dependent sugar phosphotransferase system (sugar PTS), a major carbohydrate active transport system, catalyzes the phosphorylation of incoming sugar substrates concomitantly with their translocation across the cell membrane. This system is involved in glucose transport. The sequence is that of PTS system glucose-specific EIICBA component (ptsG) from Staphylococcus aureus (strain NCTC 8325 / PS 47).